A 245-amino-acid polypeptide reads, in one-letter code: Complement C1q subcomponent subunit A (245 aa).

The first 22 residues, 1–22, serve as a signal peptide directing secretion; that stretch reads MEGPRGWLVLCVLAISLASMVT. The span at 27–38 shows a compositional bias: basic and acidic residues; it reads RAPDGKKGEAGR. Positions 27–114 are disordered; the sequence is RAPDGKKGEA…SPGNIKDQPR (88 aa). The Collagen-like domain maps to 31–109; that stretch reads GKKGEAGRPG…KGTKGSPGNI (79 aa). Residue lysine 33 is modified to 5-hydroxylysine. A glycan (O-linked (Gal...) hydroxylysine) is linked at lysine 33. 4-hydroxyproline is present on residues proline 39 and proline 45. 5-hydroxylysine is present on lysine 48. The O-linked (Gal...) hydroxylysine glycan is linked to lysine 48. Residues proline 54 and proline 57 each carry the 4-hydroxyproline modification. Residue lysine 67 is modified to 5-hydroxylysine. Residue lysine 67 is glycosylated (O-linked (Gal...) hydroxylysine). Residues proline 73, proline 79, and proline 85 each carry the 4-hydroxyproline modification. Lysine 100 bears the 5-hydroxylysine mark. Lysine 100 carries an O-linked (Gal...) hydroxylysine glycan. The C1q domain occupies 110 to 245; sequence KDQPRPAFSA…FSGFLIFPSA (136 aa). N-linked (GlcNAc...) asparagine glycosylation is present at asparagine 146. A disulfide bridge connects residues cysteine 172 and cysteine 190. A Ca(2+)-binding site is contributed by glutamine 199.

Core component of the complement C1 complex, a calcium-dependent complex composed of 1 molecule of the C1Q subcomplex, 2 molecules of C1R and 2 molecules of C1S. The C1Q subcomplex is composed 18 subunits: 3 chains of C1QA, C1QB, and C1QC trimerize to form 6 collagen-like triple helices connected to six globular ligand-recognition modules (C1q domain). Interacts with CR1 (via Sushi 24 and Sushi 25 domains). Interacts (via C-terminus) with CD33; this interaction activates CD33 inhibitory motifs. In terms of assembly, (Microbial infection) Interacts with Staphylococcus aureus protein Cna; this interaction results in the inhibition of the classical complement pathway. Post-translationally, O-linked glycans are assumed to be the Glc-Gal disaccharides typically found as secondary modifications of hydroxylated lysines in collagen-like domains.

It is found in the secreted. Its subcellular location is the cell surface. With respect to regulation, the C1Q subcomplex is inhibited by sulfated molecules, such as triterpenoid sulfates, heparan sulfate, or chondroitin sulfates. Its function is as follows. Core component of the complement C1 complex, a multiprotein complex that initiates the classical pathway of the complement system, a cascade of proteins that leads to phagocytosis and breakdown of pathogens and signaling that strengthens the adaptive immune system. The classical complement pathway is initiated by the C1Q subcomplex of the C1 complex, which specifically binds IgG or IgM immunoglobulins complexed with antigens, forming antigen-antibody complexes on the surface of pathogens: C1QA, together with C1QB and C1QC, specifically recognizes and binds the Fc regions of IgG or IgM via its C1q domain. Immunoglobulin-binding activates the proenzyme C1R, which cleaves C1S, initiating the proteolytic cascade of the complement system. The C1Q subcomplex is activated by a hexamer of IgG complexed with antigens, while it is activated by a pentameric IgM. The C1Q subcomplex also recognizes and binds phosphatidylserine exposed on the surface of cells undergoing programmed cell death, possibly promoting activation of the complement system. In Homo sapiens (Human), this protein is Complement C1q subcomponent subunit A.